We begin with the raw amino-acid sequence, 502 residues long: Probable cytosol aminopeptidase (502 aa).

Mn(2+) is bound by residues Lys269 and Asp274. Lys281 is an active-site residue. Asp292, Asp351, and Glu353 together coordinate Mn(2+). Arg355 is a catalytic residue.

This sequence belongs to the peptidase M17 family. The cofactor is Mn(2+).

The protein localises to the cytoplasm. It catalyses the reaction Release of an N-terminal amino acid, Xaa-|-Yaa-, in which Xaa is preferably Leu, but may be other amino acids including Pro although not Arg or Lys, and Yaa may be Pro. Amino acid amides and methyl esters are also readily hydrolyzed, but rates on arylamides are exceedingly low.. The catalysed reaction is Release of an N-terminal amino acid, preferentially leucine, but not glutamic or aspartic acids.. Functionally, presumably involved in the processing and regular turnover of intracellular proteins. Catalyzes the removal of unsubstituted N-terminal amino acids from various peptides. This Photobacterium profundum (strain SS9) protein is Probable cytosol aminopeptidase.